Here is an 88-residue protein sequence, read N- to C-terminus: Small ribosomal subunit protein uS17 (88 aa).

This sequence belongs to the universal ribosomal protein uS17 family. As to quaternary structure, part of the 30S ribosomal subunit.

One of the primary rRNA binding proteins, it binds specifically to the 5'-end of 16S ribosomal RNA. In Prochlorococcus marinus (strain NATL1A), this protein is Small ribosomal subunit protein uS17.